We begin with the raw amino-acid sequence, 201 residues long: Lipoprotein signal peptidase (201 aa).

Helical transmembrane passes span 33–53 (LLLSIAAVVLTLDIVTKVLAV), 86–106 (GYTWVLTLIATGVVIGIFWMG), and 110–130 (VSSWWALGLGMILGGAMGNLV). Active-site residues include aspartate 146 and aspartate 160. A helical membrane pass occupies residues 158–178 (VADPSVVVGAILLVVLSIFGF).

This sequence belongs to the peptidase A8 family.

Its subcellular location is the cell membrane. The enzyme catalyses Release of signal peptides from bacterial membrane prolipoproteins. Hydrolyzes -Xaa-Yaa-Zaa-|-(S,diacylglyceryl)Cys-, in which Xaa is hydrophobic (preferably Leu), and Yaa (Ala or Ser) and Zaa (Gly or Ala) have small, neutral side chains.. Its pathway is protein modification; lipoprotein biosynthesis (signal peptide cleavage). Its function is as follows. This protein specifically catalyzes the removal of signal peptides from prolipoproteins. The sequence is that of Lipoprotein signal peptidase from Mycobacterium leprae (strain Br4923).